A 597-amino-acid chain; its full sequence is Elongation factor 4 (597 aa).

One can recognise a tr-type G domain in the interval Asp2–Lys184. GTP-binding positions include Asp14–Thr19 and Asn131–Asp134.

Belongs to the TRAFAC class translation factor GTPase superfamily. Classic translation factor GTPase family. LepA subfamily.

It localises to the cell inner membrane. It catalyses the reaction GTP + H2O = GDP + phosphate + H(+). In terms of biological role, required for accurate and efficient protein synthesis under certain stress conditions. May act as a fidelity factor of the translation reaction, by catalyzing a one-codon backward translocation of tRNAs on improperly translocated ribosomes. Back-translocation proceeds from a post-translocation (POST) complex to a pre-translocation (PRE) complex, thus giving elongation factor G a second chance to translocate the tRNAs correctly. Binds to ribosomes in a GTP-dependent manner. The chain is Elongation factor 4 from Cupriavidus taiwanensis (strain DSM 17343 / BCRC 17206 / CCUG 44338 / CIP 107171 / LMG 19424 / R1) (Ralstonia taiwanensis (strain LMG 19424)).